The chain runs to 854 residues: MTDSQNFESHTPMMQQYLKLKAEHPEILLFYRMGDFYELFFDDAKKASRLLDISLTKRGQSAGQPIPMAGVPHHAVENYLAKLVQLGESVAICEQIGDPATSKGPVERKVIRIVTPGTVTDEALLEERQDNLLAAIWQDKNGAFGYATLDITSGRFRVTEMPDSESMAAELQRTHPAELLYPETFESMALIERQQGLRRRPIWEFECETAKQQLNLQFGTRDLTGFGVENARLALCAAGCLLQYVKDTQRTGLPHIRSITMERPQDTIILDAATRRNLELTQNLAGGCDNTLASVLDLCVTPMGSRMLKRWIHTPLRQREQLIKRQDAISALQPLYFELQPFLRQVGDLERVLARLALRSARPRDLSRMRHAFQQYQDIHQVLDQADMPYIKELQQRISQFDELRELLENAIVETPPVLVRDGGVIASGYNAELDEWRALADGASDYLEKLEVREREKWGIDTLKVGFNGVHGYYIQVSRGQSNLVPMHYVRRQTLKNAERYIIPELKEYEDKVLTSKGKALAIEKMLYEELFEKLLPHLTALQTSAEALAETDVLANLAERAESLNYTRPELTEKTGIQITGGRHPVVEQVLSEPFISNPLQLAPQRRLLIITGPNMGGKSTYMRQAALITLLAYIGSFVPAEKAVIGPIDRIFTRVGASDDLASGRSTFMVEMTETANILHNATENSLVLMDEIGRGTSTYDGLSLAWACAENLANRIKAMTLFATHYFELTTLPEKLEGTANIHLDAVEHGETIAFMHSVQEGAASKSYGLAVAALAGVPKEVIRRAKQKLKELETLSGHSGASHVETSQLMLLADIEPSEVELALNKIDPDSLTPKQALELLYHLKELNK.

615-622 is a binding site for ATP; it reads GPNMGGKS.

The protein belongs to the DNA mismatch repair MutS family.

This protein is involved in the repair of mismatches in DNA. It is possible that it carries out the mismatch recognition step. This protein has a weak ATPase activity. The sequence is that of DNA mismatch repair protein MutS from Proteus mirabilis (strain HI4320).